The following is a 92-amino-acid chain: Large ribosomal subunit protein bL28 (92 aa).

This sequence belongs to the bacterial ribosomal protein bL28 family.

This chain is Large ribosomal subunit protein bL28, found in Borrelia duttonii (strain Ly).